A 98-amino-acid polypeptide reads, in one-letter code: Small ribosomal subunit protein bS20 (98 aa).

Positions 76–98 (HPNNGARKKSRLASKLKPIEQTA) are disordered.

It belongs to the bacterial ribosomal protein bS20 family.

Its function is as follows. Binds directly to 16S ribosomal RNA. This Trichormus variabilis (strain ATCC 29413 / PCC 7937) (Anabaena variabilis) protein is Small ribosomal subunit protein bS20.